Here is a 156-residue protein sequence, read N- to C-terminus: Small ribosomal subunit protein uS7 (156 aa).

The protein belongs to the universal ribosomal protein uS7 family. Part of the 30S ribosomal subunit. Contacts proteins S9 and S11.

Functionally, one of the primary rRNA binding proteins, it binds directly to 16S rRNA where it nucleates assembly of the head domain of the 30S subunit. Is located at the subunit interface close to the decoding center, probably blocks exit of the E-site tRNA. In Rhodospirillum centenum (strain ATCC 51521 / SW), this protein is Small ribosomal subunit protein uS7.